Here is a 276-residue protein sequence, read N- to C-terminus: uncharacterized protein (276 aa).

The interval 1 to 20 (MMSDEQHQGGDGQTTTNTNT) is disordered.

This is an uncharacterized protein from Dictyostelium discoideum (Social amoeba).